A 312-amino-acid polypeptide reads, in one-letter code: Lipoyl synthase (312 aa).

Positions 51, 56, 62, 77, 81, 84, and 290 each coordinate [4Fe-4S] cluster. The Radical SAM core domain occupies 63-280 (WSRKTATYLA…RTIGTSLGLF (218 aa)).

This sequence belongs to the radical SAM superfamily. Lipoyl synthase family. It depends on [4Fe-4S] cluster as a cofactor.

It is found in the cytoplasm. It catalyses the reaction [[Fe-S] cluster scaffold protein carrying a second [4Fe-4S](2+) cluster] + N(6)-octanoyl-L-lysyl-[protein] + 2 oxidized [2Fe-2S]-[ferredoxin] + 2 S-adenosyl-L-methionine + 4 H(+) = [[Fe-S] cluster scaffold protein] + N(6)-[(R)-dihydrolipoyl]-L-lysyl-[protein] + 4 Fe(3+) + 2 hydrogen sulfide + 2 5'-deoxyadenosine + 2 L-methionine + 2 reduced [2Fe-2S]-[ferredoxin]. It participates in protein modification; protein lipoylation via endogenous pathway; protein N(6)-(lipoyl)lysine from octanoyl-[acyl-carrier-protein]: step 2/2. In terms of biological role, catalyzes the radical-mediated insertion of two sulfur atoms into the C-6 and C-8 positions of the octanoyl moiety bound to the lipoyl domains of lipoate-dependent enzymes, thereby converting the octanoylated domains into lipoylated derivatives. The polypeptide is Lipoyl synthase (Chlamydia caviae (strain ATCC VR-813 / DSM 19441 / 03DC25 / GPIC) (Chlamydophila caviae)).